We begin with the raw amino-acid sequence, 577 residues long: MTEMLKGIAASDGVAVAKAYLLVQPDLSFETVTVEDTSAEEARLDAALKASQDELSIIREKAVETLGEEAAAVFDAHLMVLADPEMISQIKETIRAKQTNAEAGLKEVTDMFITIFEGMEDNPYMQERAADIRDVAKRVLAHLLGAKLPNPATIDEESIVIAHDLTPSDTAQLNKQFVKAFVTNIGGRTSHSAIMARTLEIAAVLGTNDITSRVKDGDIVAVNGITGEVIINPTDEQVAEFKAAGEAYAKQKAEWALLKDAKTVTADGKHFELAANIGTPKDVEGVNANGAEAVGLYRTEFLYMDSQDFPTEDEQYEAYKAVLEGMNGKPVVVRTMDIGGDKELPYLDLPKEMNPFLGFRALRISISETGNAMFRTQIRALLRASVHGQLRIMFPMVALLKEFRAAKAIFDEEKANLKAEGVAVSDDIQVGIMIEIPAAAMLADQFAKEVDFFSIGTNDLIQYTMAADRMNEQVSYLYQPYNPSILRLINNVIKAAHAEGKWVGMCGEMAGDQKAVPLLVEMGLDEFSMSATSILRTRSLMKKLDTAKMQEYANRALTECSTMEEVLELSKEYVNVD.

Residue His-191 is the Tele-phosphohistidine intermediate of the active site. Residues Arg-298 and Arg-334 each coordinate phosphoenolpyruvate. Glu-435 and Asp-459 together coordinate Mg(2+). Phosphoenolpyruvate contacts are provided by residues Asn-458 to Asp-459 and Arg-469. Cys-506 acts as the Proton donor in catalysis.

It belongs to the PEP-utilizing enzyme family. In terms of assembly, homodimer. Mg(2+) is required as a cofactor.

Its subcellular location is the cytoplasm. It catalyses the reaction L-histidyl-[protein] + phosphoenolpyruvate = N(pros)-phospho-L-histidyl-[protein] + pyruvate. In terms of biological role, general (non sugar-specific) component of the phosphoenolpyruvate-dependent sugar phosphotransferase system (sugar PTS). This major carbohydrate active-transport system catalyzes the phosphorylation of incoming sugar substrates concomitantly with their translocation across the cell membrane. Enzyme I transfers the phosphoryl group from phosphoenolpyruvate (PEP) to the phosphoryl carrier protein (HPr). The protein is Phosphoenolpyruvate-protein phosphotransferase (ptsI) of Streptococcus equinus (Streptococcus bovis).